Reading from the N-terminus, the 650-residue chain is Probable protein phosphatase 2C 36 (650 aa).

The disordered stretch occupies residues 146-166 (SGKKTKEKAKLKKSGSKSFTK). Positions 148 to 166 (KKTKEKAKLKKSGSKSFTK) are enriched in basic residues. Residues 239 to 641 (ESALEEPKIQ…DDVSVIVISL (403 aa)) form the PPM-type phosphatase domain. Mn(2+)-binding residues include D276, G277, D569, and D632.

The protein belongs to the PP2C family. Mg(2+) serves as cofactor. The cofactor is Mn(2+).

It localises to the nucleus. It catalyses the reaction O-phospho-L-seryl-[protein] + H2O = L-seryl-[protein] + phosphate. It carries out the reaction O-phospho-L-threonyl-[protein] + H2O = L-threonyl-[protein] + phosphate. The polypeptide is Probable protein phosphatase 2C 36 (PLL3) (Arabidopsis thaliana (Mouse-ear cress)).